The sequence spans 208 residues: FMN-dependent NADH:quinone oxidoreductase (208 aa).

FMN-binding positions include 17-19 (SNS), 99-102 (MWNL), and 143-146 (SRGG).

The protein belongs to the azoreductase type 1 family. As to quaternary structure, homodimer. Requires FMN as cofactor.

The enzyme catalyses 2 a quinone + NADH + H(+) = 2 a 1,4-benzosemiquinone + NAD(+). The catalysed reaction is N,N-dimethyl-1,4-phenylenediamine + anthranilate + 2 NAD(+) = 2-(4-dimethylaminophenyl)diazenylbenzoate + 2 NADH + 2 H(+). In terms of biological role, quinone reductase that provides resistance to thiol-specific stress caused by electrophilic quinones. Its function is as follows. Also exhibits azoreductase activity. Catalyzes the reductive cleavage of the azo bond in aromatic azo compounds to the corresponding amines. The chain is FMN-dependent NADH:quinone oxidoreductase from Staphylococcus carnosus (strain TM300).